The following is a 455-amino-acid chain: Killer cell immunoglobulin-like receptor 3DL2 (455 aa).

A signal peptide spans 1-21 (MSLTVVSMACVGFFLLQGAWP). Residues 22 to 340 (LMGGQDKPFL…SKSGICRHLH (319 aa)) lie on the Extracellular side of the membrane. Ig-like C2-type domains follow at residues 42–102 (GGHV…RPHS), 137–202 (GETV…VPHS), and 237–300 (GENV…FRAL). Intrachain disulfides connect Cys-49-Cys-95 and Cys-144-Cys-195. 4 N-linked (GlcNAc...) asparagine glycosylation sites follow: Asn-179, Asn-239, Asn-273, and Asn-306. Cys-244 and Cys-293 are oxidised to a cystine. A helical membrane pass occupies residues 341-360 (VLIGTSVVIFLFILLLFFLL). At 361 to 455 (YRWCSNKKNA…APQSGLEGVF (95 aa)) the chain is on the cytoplasmic side.

This sequence belongs to the immunoglobulin superfamily. In terms of assembly, interacts with peptide-free HLA-F open conformer. As to expression, expressed in astrocytes.

The protein localises to the cell membrane. Its function is as follows. Receptor on natural killer (NK) cells and T cells for MHC class I molecules. Upon binding of peptide-free HLA-F open conformer, negatively regulates NK and T cell effector functions. Acts as a receptor on astrocytes for HLA-F. Through interaction with HLA-F, may protect motor neurons from astrocyte-induced toxicity. The sequence is that of Killer cell immunoglobulin-like receptor 3DL2 from Homo sapiens (Human).